The following is a 722-amino-acid chain: MIALKATEMQHNNNALQQQQQLQHQLLQQHQQQHQQQLQQQLNSPDNNYIWATTHNANISRNNAMLQLQQQQLRAPWITDCNKQHHINNNNSMNVNYNQQLTQQPQQQQQQTQYMQHNYNNYTQQQQQQHLVPATTSQSNSHFYQCNQQQQQQQFLAPTTTTAAVVVAAAHQQHQTQQQHQSQQQQQHQRQDYASLQMGRQLGNFETGQSVLTLTTPTLTPTTTRNIEDTLGHLLSDTQTDRVAGCAGFAVPKVLPNAIDVLGMGIPTGVSSLPLQQTFDLSLGQGSESEDSNASYNDTQMNEEQDTTDTSSAHTDSTSYQAGHIMAGSVNGGGVNNFSNVLAAVSSSRGSASVGSSNANTSNTPARRGGGRRPNRSTNMTPEEEQKRAVRRERNKQAAARCRKRRVDQTNELTEEVEQLEKRGESMRKEIEVLTNSKNQLEYLLATHRATCQKIRSDMLSVVTCNGLIAPAGLLSAGSSGSGASSHHNHNSNDSSNGTITGMDATLNSTGRSNSPLDLKPAANIDSLLMHIKDEPLDGAIDSGSSLDQDGPPPSKRITLPPMSTMPHVHLSTILTPTGASSGSLQTPITSTAPGGFGSAFPVTSNGSSINNINSIGNNMNSPTLNAHNKVPKERPNTLAFQRPLGQMHLTMANNKAGGPTQIQGVPIQTPSTGTFNFDSLMDGGTGLTPVSGPLVPNSSSTNKHPLELPTPTAEPSKLVSL.

Over residues 173-188 (QHQTQQQHQSQQQQQH) the composition is skewed to low complexity. Disordered regions lie at residues 173–193 (QHQT…RQDY), 283–317 (LGQG…HTDS), and 350–407 (GSAS…KRRV). A compositionally biased stretch (polar residues) spans 283–300 (LGQGSESEDSNASYNDTQ). Low complexity-rich tracts occupy residues 308-317 (TDTSSAHTDS) and 350-364 (GSAS…TSNT). Residues 385 to 448 (EQKRAVRRER…NQLEYLLATH (64 aa)) enclose the bZIP domain. Residues 387–406 (KRAVRRERNKQAAARCRKRR) are basic motif. The tract at residues 413 to 420 (LTEEVEQL) is leucine-zipper. Positions 477-498 (AGSSGSGASSHHNHNSNDSSNG) are enriched in low complexity. Disordered regions lie at residues 477-519 (AGSS…PLDL) and 683-722 (DGGT…LVSL). A compositionally biased stretch (polar residues) spans 506-516 (TLNSTGRSNSP). Position 515 is a phosphoserine (serine 515).

This sequence belongs to the bZIP family. Fos subfamily. As to quaternary structure, homodimer. Heterodimer with Jra. The kay-Jra heterodimer binds more stably to the AP-1 site than either of the two proteins alone.

The protein localises to the nucleus. In terms of biological role, developmentally regulated transcription factor AP-1 binds and recognizes the enhancer DNA sequence: 5'-TGA[CG]TCA-3'. May play a role in the function or determination of a particular subset of cells in the developing embryo. It is able to carry out its function either independently of or in conjunction with Jra. The sequence is that of Transcription factor kayak, isoforms D/sro from Drosophila melanogaster (Fruit fly).